The primary structure comprises 284 residues: Probable palmitoyltransferase ZDHHC24 (284 aa).

The Cytoplasmic segment spans residues 1-18 (MGESWAARGAEGAPARMP). A helical transmembrane segment spans residues 19 to 39 (LVLTALWAAVVVLELAYVMVL). Residues 40–52 (GPGPPPLGPLARA) are Extracellular-facing. The helical transmembrane segment at 53–73 (LQLALAAYQLLNLLGNVVLFL) threads the bilayer. Over 74–137 (RSDPSIRGVM…GCCVGFHNYR (64 aa)) the chain is Cytoplasmic. The DHHC domain maps to 94–144 (AYCYQCQSQVPPRSGHCSACRVCILRRDHHCRLLGCCVGFHNYRPFLCLLL). Cysteine 124 serves as the catalytic S-palmitoyl cysteine intermediate. A helical transmembrane segment spans residues 138-158 (PFLCLLLHSAGVLLHISVLLG). Residues 159–166 (PALSALLQ) lie on the Extracellular side of the membrane. A helical membrane pass occupies residues 167–187 (AHSALYTVALLLLPWLMLLTG). The Cytoplasmic segment spans residues 188–195 (KVSLAQFA). A helical membrane pass occupies residues 196 to 216 (LAFVVDTCVAGALLCGAGLLF). The Extracellular portion of the chain corresponds to 217-284 (HGMLLLRGQT…TPGDVGLVTS (68 aa)).

This sequence belongs to the DHHC palmitoyltransferase family.

The protein localises to the membrane. The catalysed reaction is L-cysteinyl-[protein] + hexadecanoyl-CoA = S-hexadecanoyl-L-cysteinyl-[protein] + CoA. Probable palmitoyltransferase that could catalyze the addition of palmitate onto various protein substrates. This is Probable palmitoyltransferase ZDHHC24 from Mus musculus (Mouse).